The chain runs to 1431 residues: Collagen alpha-1(XVII) chain (1431 aa).

Residues 1–468 (MDVTKKNKRD…AWCPCGSCCS (468 aa)) are Cytoplasmic-facing. The tract at residues 1-569 (MDVTKKNKRD…MTEQENGNLR (569 aa)) is nonhelical region (NC16). 4 disordered regions span residues 25 to 155 (TRLT…PSTR), 167 to 188 (KGSRSASASPTRNTSSTLPIPK), 304 to 324 (TAYGVKKNVPQPPTVTSTGVS), and 422 to 449 (SVENHNYDRGGGSGGGARGGGGSGGGGG). Residues 60–74 (GSSGYINSSGSIRGN) show a composition bias toward low complexity. Composition is skewed to polar residues over residues 75-96 (ASTSSYRRAHSPASTLPNSPGS), 111-120 (EGSSSGNSSP), and 170-184 (RSASASPTRNTSSTL). The segment at 146–231 (RLQSASPSTR…WSSTLPAGSS (86 aa)) is necessary for interaction with DST and for the recruitment of DST to hemidesmosome. The segment covering 430–449 (RGGGSGGGARGGGGSGGGGG) has biased composition (gly residues). Residues 469–489 (WWKWLLGLLLTWLLLLGLLFG) traverse the membrane as a helical; Signal-anchor for type II membrane protein segment. Residues 490–1431 (LIALAEEVRK…RRRRSIAIKP (942 aa)) are Extracellular-facing. Ser-547 carries the post-translational modification Phosphoserine; by CK2. Disordered regions lie at residues 564–869 (ENGN…SFIS), 884–996 (DLRG…SSSG), 1158–1178 (DIIGPPGPPGPPGPRGPPGVS), and 1208–1249 (FIIG…SSSV). Residues 570–1417 (GNPGPKGDMG…KGDKGDKGDQ (848 aa)) are triple-helical region. Composition is skewed to low complexity over residues 657–673 (PRGLPGVPGSVGPRGPN), 738–751 (EPGAKGAMGPAGPD), and 778–799 (PGKPGVTGPQGPQGLPGSPGRP). Pro residues-rich tracts occupy residues 823–844 (PGPPGPPGAMGPPGPSGTPGPA), 889–911 (LGPPGPRGPPGPSIPGPPGPRGP), 937–946 (PPGPPGPPGP), 979–989 (PPGPPGPPGPP), 1162–1174 (PPGPPGPPGPRGP), and 1212–1221 (PPGPPGPQGP). An N-linked (GlcNAc...) asparagine glycan is attached at Asn-1230. The segment covering 1232 to 1249 (SWGSSSSARRGTAYSSSV) has biased composition (polar residues). N-linked (GlcNAc...) asparagine glycosylation is present at Asn-1356. Residues 1366–1431 (RTHGAIPGPP…RRRRSIAIKP (66 aa)) form a disordered region. The span at 1407 to 1416 (QKGDKGDKGD) shows a compositional bias: basic and acidic residues. A nonhelical region (NC1) region spans residues 1418 to 1431 (VYTGRRRRSIAIKP). The segment covering 1421-1431 (GRRRRSIAIKP) has biased composition (basic residues).

As to quaternary structure, homotrimers of alpha 1(XVII)chains. Interacts (via cytoplasmic region) with ITGB4 (via cytoplasmic region). Interacts (via cytoplasmic region) with DST (via N-terminus). Interacts (via N-terminus) with PLEC. Interacts (via cytoplasmic region) with DSP. Post-translationally, the intracellular/endo domain is disulfide-linked. Prolines at the third position of the tripeptide repeating unit (G-X-Y) are hydroxylated in some or all of the chains. In terms of processing, the ectodomain is shedded from the surface of keratinocytes resulting in a 120-kDa soluble form, also named as 120 kDa linear IgA disease antigen homolog. The shedding is mediated by membrane-bound metalloproteases. This cleavage is inhibited by phosphorylation at Ser-547.

The protein resides in the cell junction. The protein localises to the hemidesmosome. It is found in the membrane. Its subcellular location is the secreted. It localises to the extracellular space. The protein resides in the extracellular matrix. The protein localises to the basement membrane. Its function is as follows. May play a role in the integrity of hemidesmosome and the attachment of basal keratinocytes to the underlying basement membrane. In terms of biological role, the 120 kDa linear IgA disease antigen homolog is an anchoring filament component involved in dermal-epidermal cohesion. The sequence is that of Collagen alpha-1(XVII) chain (COL17A1) from Mesocricetus auratus (Golden hamster).